We begin with the raw amino-acid sequence, 332 residues long: Trans-2'-carboxybenzalpyruvate hydratase-aldolase (332 aa).

Lys178 serves as the catalytic Schiff-base intermediate with substrate.

This sequence belongs to the DapA family. In terms of assembly, homotrimer.

The catalysed reaction is (3Z)-4-(2-carboxyphenyl)-2-oxobut-3-enoate + H2O = 2-formylbenzoate + pyruvate. Its activity is regulated as follows. Not inhibited by sodium borohydride or sodium pyruvate. Unaffected by EDTA, EGTA, Mn(2+), Mg(2+) and Ca(2+). In terms of biological role, plays a role in phenanthrene catabolism. Catalyzes the transformation of trans-2'-carboxbenzalpyruvate to 2-formylbenzoate and pyruvate. The sequence is that of Trans-2'-carboxybenzalpyruvate hydratase-aldolase from Nocardioides sp. (strain KP7).